The chain runs to 274 residues: Glutamate--cysteine ligase regulatory subunit (274 aa).

S59 carries the post-translational modification Phosphoserine. K263 carries the N6-acetyllysine modification.

Belongs to the aldo/keto reductase family. Glutamate--cysteine ligase light chain subfamily. In terms of assembly, heterodimer of a catalytic heavy chain and a regulatory light chain.

Its pathway is sulfur metabolism; glutathione biosynthesis; glutathione from L-cysteine and L-glutamate: step 1/2. The chain is Glutamate--cysteine ligase regulatory subunit (Gclm) from Mus musculus (Mouse).